The following is a 307-amino-acid chain: Malonyl-[acyl-carrier protein] O-methyltransferase (307 aa).

Belongs to the methyltransferase superfamily.

It carries out the reaction malonyl-[ACP] + S-adenosyl-L-methionine = malonyl-[ACP] methyl ester + S-adenosyl-L-homocysteine. It functions in the pathway cofactor biosynthesis; biotin biosynthesis. Its function is as follows. Converts the free carboxyl group of a malonyl-thioester to its methyl ester by transfer of a methyl group from S-adenosyl-L-methionine (SAM). It allows to synthesize pimeloyl-ACP via the fatty acid synthetic pathway. This Nitrosospira multiformis (strain ATCC 25196 / NCIMB 11849 / C 71) protein is Malonyl-[acyl-carrier protein] O-methyltransferase.